We begin with the raw amino-acid sequence, 230 residues long: Large ribosomal subunit protein uL1 (230 aa).

The protein belongs to the universal ribosomal protein uL1 family. As to quaternary structure, part of the 50S ribosomal subunit.

In terms of biological role, binds directly to 23S rRNA. The L1 stalk is quite mobile in the ribosome, and is involved in E site tRNA release. Its function is as follows. Protein L1 is also a translational repressor protein, it controls the translation of the L11 operon by binding to its mRNA. This Bradyrhizobium sp. (strain ORS 278) protein is Large ribosomal subunit protein uL1.